The following is a 213-amino-acid chain: Alkylbase DNA glycosidase-like protein mag2 (213 aa).

Positions 53, 54, 61, 91, 94, 96, 97, 99, 102, 137, 138, 140, 143, 163, and 164 each coordinate DNA.

It belongs to the alkylbase DNA glycosidase AlkA family.

Its subcellular location is the nucleus. Functionally, alkylbase DNA glycosidase-like protein that shows no DNA glycosylase activity for alkylated bases. The molecular role of mag2 appears to be abasic (AP) site recognition and protection, while possibly facilitating damage signaling by structurally sculpting the DNA substrate. Stimulates AP site binding to mismatch repair protein mutS. The protein is Alkylbase DNA glycosidase-like protein mag2 of Schizosaccharomyces pombe (strain 972 / ATCC 24843) (Fission yeast).